The primary structure comprises 357 residues: Tetraacyldisaccharide 4'-kinase (357 aa).

An ATP-binding site is contributed by 54-61; the sequence is TVGGAGKT.

The protein belongs to the LpxK family.

The catalysed reaction is a lipid A disaccharide + ATP = a lipid IVA + ADP + H(+). It participates in glycolipid biosynthesis; lipid IV(A) biosynthesis; lipid IV(A) from (3R)-3-hydroxytetradecanoyl-[acyl-carrier-protein] and UDP-N-acetyl-alpha-D-glucosamine: step 6/6. Transfers the gamma-phosphate of ATP to the 4'-position of a tetraacyldisaccharide 1-phosphate intermediate (termed DS-1-P) to form tetraacyldisaccharide 1,4'-bis-phosphate (lipid IVA). The polypeptide is Tetraacyldisaccharide 4'-kinase (Rhizobium leguminosarum bv. trifolii (strain WSM2304)).